The primary structure comprises 944 residues: Trehalose monomycolate exporter MmpL3 (944 aa).

Residues 1 to 13 (MFAWWGRTVYRYR) lie on the Cytoplasmic side of the membrane. A helical transmembrane segment spans residues 14-34 (FIVIGVMVALCLGGGVFGLSL). Residues 35–185 (GKHVTQSGFY…TIATDQRRME (151 aa)) lie on the Periplasmic side of the membrane. Position 40-44 (40-44 (QSGFY)) interacts with a 1,2-diacylglycero-3-phosphoethanolamine. A helical transmembrane segment spans residues 186 to 206 (VLALPLVAVVLFFVFGGVIAA). Over 207–209 (GLP) the chain is Cytoplasmic. The chain crosses the membrane as a helical span at residues 210–230 (VMVGGLCIAGALGIMRFLAIF). The Periplasmic segment spans residues 231-235 (GPVHY). A helical transmembrane segment spans residues 236-256 (FAQPVVSLIGLGIAIDYGLFI). The Cytoplasmic portion of the chain corresponds to 257-286 (VSRFREEIAEGYDTETAVRRTVITAGRTVT). Residues 287 to 307 (FSAVLIVASAIGLLLFPQGFL) form a helical membrane-spanning segment. At 308-314 (KSLTYAT) the chain is on the periplasmic side. A helical transmembrane segment spans residues 315–335 (IASVMLSAILSITVLPACLGI). Residues 336–396 (LGKHVDALGV…KLVNRVMKRP (61 aa)) lie on the Cytoplasmic side of the membrane. Residues 397 to 417 (VLFAAPIVIIMILLIIPVGKL) traverse the membrane as a helical segment. The Periplasmic portion of the chain corresponds to 418-562 (SLGGISEKYL…HGLFAKMPLM (145 aa)). The helical transmembrane segment at 563-583 (VVILLTTTIVLMFLAFGSVVL) threads the bilayer. Residues 584-586 (PIK) are Cytoplasmic-facing. Residues 587 to 607 (ATLMSALTLGSTMGILTWIFV) form a helical membrane-spanning segment. The Periplasmic portion of the chain corresponds to 608 to 616 (DGHFSKWLN). A helical transmembrane segment spans residues 617-637 (FTPTPLTAPVIGLIIALVFGL). Over 638–672 (STDYEVFLVSRMVEARERGMSTQEAIRIGTAATGR) the chain is Cytoplasmic. A helical transmembrane segment spans residues 673–693 (IITAAALIVAVVAGAFVFSDL). The Periplasmic segment spans residues 694 to 698 (VMMKY). Residues 699–719 (LAFGLMAALLLDATVVRMFLV) traverse the membrane as a helical segment. The Cytoplasmic portion of the chain corresponds to 720–944 (PSVMKLLGDD…QDLLRREGRL (225 aa)). The disordered stretch occupies residues 778–944 (AAGDPRPPHD…QDLLRREGRL (167 aa)). Positions 791 to 828 (PLAESPRPARSSPASSPELTPALEATAAPAAPSGASTT) are enriched in low complexity. Over residues 829 to 839 (RMQIGSSTEPP) the composition is skewed to polar residues. Positions 855–866 (STPPPTPTPPSA) are enriched in pro residues.

The protein belongs to the resistance-nodulation-cell division (RND) (TC 2.A.6) family. MmpL subfamily. Monomer. Interacts with TtfA (via N-terminus); active trehalose monomycolate (TMM) biosynthesis is not required for the complex formation.

The protein resides in the cell inner membrane. The protein localises to the cell septum. Its subcellular location is the cell tip. In terms of biological role, transports trehalose monomycolate (TMM) to the cell wall. Flips TMM across the inner membrane. Membrane potential is not required for this function. Transports probably phosphatidylethanolamine (PE) as well. Binds specifically both TMM and PE, but not trehalose dimycolate (TDM). Also binds diacylglycerol (DAG) and other phospholipids, including phosphatidylglycerol (PG), phosphatidylinositol (PI), and cardiolipin (CDL). Contributes to membrane potential, cell wall composition, antibiotic susceptibility and fitness. Could also be part of a heme-iron acquisition system. This is Trehalose monomycolate exporter MmpL3 (mmpL3) from Mycobacterium tuberculosis (strain CDC 1551 / Oshkosh).